We begin with the raw amino-acid sequence, 297 residues long: Nucleotide-binding protein Bsph_0448 (297 aa).

19 to 26 (GMSGAGKT) is a binding site for ATP. A GTP-binding site is contributed by 70 to 73 (DMRG).

Belongs to the RapZ-like family.

In terms of biological role, displays ATPase and GTPase activities. This is Nucleotide-binding protein Bsph_0448 from Lysinibacillus sphaericus (strain C3-41).